Reading from the N-terminus, the 94-residue chain is uncharacterized protein (94 aa).

The interval Met-1–Thr-22 is disordered. The stretch at Met-1 to Leu-77 forms a coiled coil.

This is an uncharacterized protein from Acheta domesticus (House cricket).